Consider the following 262-residue polypeptide: Type III pantothenate kinase (262 aa).

Residue 6–13 (DVGNTNAV) coordinates ATP. Residues Tyr100 and 107–110 (GADR) each bind substrate. The active-site Proton acceptor is the Asp109. Asp129 contacts K(+). Position 132 (Thr132) interacts with ATP. Position 184 (Thr184) interacts with substrate.

The protein belongs to the type III pantothenate kinase family. As to quaternary structure, homodimer. NH4(+) serves as cofactor. Requires K(+) as cofactor.

The protein resides in the cytoplasm. It carries out the reaction (R)-pantothenate + ATP = (R)-4'-phosphopantothenate + ADP + H(+). It participates in cofactor biosynthesis; coenzyme A biosynthesis; CoA from (R)-pantothenate: step 1/5. Its function is as follows. Catalyzes the phosphorylation of pantothenate (Pan), the first step in CoA biosynthesis. This is Type III pantothenate kinase from Bacillus cytotoxicus (strain DSM 22905 / CIP 110041 / 391-98 / NVH 391-98).